A 956-amino-acid polypeptide reads, in one-letter code: DNA polymerase I (956 aa).

Positions 209–296 (VTVRQWVDYR…VTDLPLDIEF (88 aa)) constitute a 5'-3' exonuclease domain.

The protein belongs to the DNA polymerase type-A family. As to quaternary structure, single-chain monomer with multiple functions.

The enzyme catalyses DNA(n) + a 2'-deoxyribonucleoside 5'-triphosphate = DNA(n+1) + diphosphate. In terms of biological role, a DNA polymerase, required for DNA repair after DNA damage induced by ionizing radiation (IR); this is not the major DNA polymerase. Following severe irradiation (7 kGy of gamma irradiation) genomic DNA is fragmented. DNA is progressively degraded for the first 1.5 hours after IR, in a step promoted by RecA and counterbalanced by DNA Pol I and Pol III, followed by massive DNA synthesis and genome reassembly in the next hour. Optimal priming of DNA synthesis requires both RecA and RadA, Pol III initiates DNA synthesis while both Pol I and Pol III are required for its continuation. May also have 5'-3' exonuclease activity. The sequence is that of DNA polymerase I (polA) from Deinococcus radiodurans (strain ATCC 13939 / DSM 20539 / JCM 16871 / CCUG 27074 / LMG 4051 / NBRC 15346 / NCIMB 9279 / VKM B-1422 / R1).